The sequence spans 565 residues: Thiol:disulfide interchange protein DsbD (565 aa).

The N-terminal stretch at Met-1–Ala-19 is a signal peptide. Cystine bridges form between Cys-122/Cys-128 and Cys-182/Cys-304. 7 consecutive transmembrane segments (helical) span residues Leu-163–Val-183, Leu-208–Val-228, Tyr-243–Phe-263, Ile-296–Ile-316, Trp-323–Ile-343, Trp-357–Leu-377, and Val-384–Thr-404. The Thioredoxin domain maps to Trp-434 to Pro-565. A disulfide bridge connects residues Cys-480 and Cys-483.

It belongs to the thioredoxin family. DsbD subfamily.

It is found in the cell inner membrane. It carries out the reaction [protein]-dithiol + NAD(+) = [protein]-disulfide + NADH + H(+). The enzyme catalyses [protein]-dithiol + NADP(+) = [protein]-disulfide + NADPH + H(+). Its function is as follows. Required to facilitate the formation of correct disulfide bonds in some periplasmic proteins and for the assembly of the periplasmic c-type cytochromes. Acts by transferring electrons from cytoplasmic thioredoxin to the periplasm. This transfer involves a cascade of disulfide bond formation and reduction steps. This Shigella boydii serotype 4 (strain Sb227) protein is Thiol:disulfide interchange protein DsbD.